Consider the following 146-residue polypeptide: UPF0178 protein BCAH187_A3092 (146 aa).

It belongs to the UPF0178 family.

The chain is UPF0178 protein BCAH187_A3092 from Bacillus cereus (strain AH187).